The sequence spans 522 residues: Probable cytosolic Fe-S cluster assembly factor narfl (522 aa).

The [4Fe-4S] cluster site is built by C26, C73, C76, C79, C205, C281, C439, and C443.

It belongs to the NARF family.

Its function is as follows. Component of the cytosolic iron-sulfur (Fe/S) protein assembly machinery. Required for maturation of extramitochondrial Fe/S proteins. This Dictyostelium discoideum (Social amoeba) protein is Probable cytosolic Fe-S cluster assembly factor narfl (narfl).